The sequence spans 461 residues: Putative aldehyde dehydrogenase FUS7 (461 aa).

220–225 (GSTATG) is an NAD(+) binding site. Residues Glu242 and Cys276 contribute to the active site.

This sequence belongs to the aldehyde dehydrogenase family.

It catalyses the reaction an aldehyde + NAD(+) + H2O = a carboxylate + NADH + 2 H(+). Putative aldehyde dehydrogenase; part of the gene cluster that mediates the biosynthesis of the mycotoxin fusarin C. Within the cluster, FUS1, FUS2, FUS8 and FUS9 are sufficient for fusarin production. The other FUS cluster members are not essential for fusarin C biosynthesis. The sequence is that of Putative aldehyde dehydrogenase FUS7 from Gibberella moniliformis (strain M3125 / FGSC 7600) (Maize ear and stalk rot fungus).